Here is a 613-residue protein sequence, read N- to C-terminus: Protein ECM3 (613 aa).

4 consecutive transmembrane segments (helical) span residues 10 to 30 (IWAS…GFGL), 74 to 94 (GIIC…AFIV), 106 to 126 (GGIL…AYLQ), and 143 to 163 (VANV…LGGF). The disordered stretch occupies residues 177–256 (DEENTLTNDD…PAIDDRSSNS (80 aa)). Polar residues-rich tracts occupy residues 187 to 206 (SAQQ…SNQD) and 213 to 226 (ESTV…SYIS). Serine 291 and serine 338 each carry phosphoserine. Positions 345–366 (RRRKSSISSQGAPSVLQADGTI) are disordered. 4 helical membrane-spanning segments follow: residues 432 to 452 (MAVI…LFVT), 471 to 491 (FIMD…LILL), 546 to 566 (MLLF…LIYF), and 587 to 607 (FLML…SYFI).

Its subcellular location is the endoplasmic reticulum membrane. May be involved in cell wall organization and biogenesis. This Saccharomyces cerevisiae (strain ATCC 204508 / S288c) (Baker's yeast) protein is Protein ECM3 (ECM3).